The sequence spans 198 residues: Phosphoheptose isomerase (198 aa).

The SIS domain maps to 36 to 198; the sequence is MARALGADRK…DRTLFGGPGG (163 aa). 51–53 contributes to the substrate binding site; it reads NGG. Zn(2+) is bound by residues His-60 and Glu-64. Substrate is bound by residues Glu-64, 93–94, 119–121, Ser-124, and Gln-174; these read ND and STS. Zn(2+) is bound by residues Gln-174 and His-182.

This sequence belongs to the SIS family. GmhA subfamily. As to quaternary structure, homotetramer. Requires Zn(2+) as cofactor.

The protein localises to the cytoplasm. The catalysed reaction is 2 D-sedoheptulose 7-phosphate = D-glycero-alpha-D-manno-heptose 7-phosphate + D-glycero-beta-D-manno-heptose 7-phosphate. It participates in carbohydrate biosynthesis; D-glycero-D-manno-heptose 7-phosphate biosynthesis; D-glycero-alpha-D-manno-heptose 7-phosphate and D-glycero-beta-D-manno-heptose 7-phosphate from sedoheptulose 7-phosphate: step 1/1. In terms of biological role, catalyzes the isomerization of sedoheptulose 7-phosphate in D-glycero-D-manno-heptose 7-phosphate. The polypeptide is Phosphoheptose isomerase (Halorhodospira halophila (strain DSM 244 / SL1) (Ectothiorhodospira halophila (strain DSM 244 / SL1))).